A 277-amino-acid chain; its full sequence is Ribosomal protein L11 methyltransferase (277 aa).

The S-adenosyl-L-methionine site is built by threonine 130, glycine 151, aspartate 172, and asparagine 213.

The protein belongs to the methyltransferase superfamily. PrmA family.

It localises to the cytoplasm. The enzyme catalyses L-lysyl-[protein] + 3 S-adenosyl-L-methionine = N(6),N(6),N(6)-trimethyl-L-lysyl-[protein] + 3 S-adenosyl-L-homocysteine + 3 H(+). Methylates ribosomal protein L11. The protein is Ribosomal protein L11 methyltransferase of Campylobacter concisus (strain 13826).